Here is a 371-residue protein sequence, read N- to C-terminus: DNA primase DnaG (371 aa).

Residues 173 to 248 enclose the Toprim domain; that stretch reads DEIILVEGRA…DIDYVAVAPP (76 aa). 3 residues coordinate Mg(2+): glutamate 179, aspartate 221, and aspartate 223.

The protein belongs to the archaeal DnaG primase family. As to quaternary structure, forms a ternary complex with MCM helicase and DNA. Component of the archaeal exosome complex. The cofactor is Mg(2+).

It carries out the reaction ssDNA + n NTP = ssDNA/pppN(pN)n-1 hybrid + (n-1) diphosphate.. Functionally, RNA polymerase that catalyzes the synthesis of short RNA molecules used as primers for DNA polymerase during DNA replication. Also part of the exosome, which is a complex involved in RNA degradation. Acts as a poly(A)-binding protein that enhances the interaction between heteromeric, adenine-rich transcripts and the exosome. This is DNA primase DnaG from Nanoarchaeum equitans (strain Kin4-M).